The sequence spans 480 residues: 3-isopropylmalate dehydratase large subunit (480 aa).

Positions 360, 418, and 421 each coordinate [4Fe-4S] cluster.

Belongs to the aconitase/IPM isomerase family. LeuC type 1 subfamily. In terms of assembly, heterodimer of LeuC and LeuD. [4Fe-4S] cluster serves as cofactor.

The enzyme catalyses (2R,3S)-3-isopropylmalate = (2S)-2-isopropylmalate. It functions in the pathway amino-acid biosynthesis; L-leucine biosynthesis; L-leucine from 3-methyl-2-oxobutanoate: step 2/4. Catalyzes the isomerization between 2-isopropylmalate and 3-isopropylmalate, via the formation of 2-isopropylmaleate. The sequence is that of 3-isopropylmalate dehydratase large subunit from Anaeromyxobacter dehalogenans (strain 2CP-1 / ATCC BAA-258).